A 944-amino-acid chain; its full sequence is UvrABC system protein A (944 aa).

Residue 33–40 (GLSGSGKS) participates in ATP binding. The C4-type zinc-finger motif lies at 252–279 (CPICGFSIGELEPRMFSFNSPFGACPTC). ABC transporter domains lie at 309–587 (WEPT…KKSL) and 607–935 (ITDR…QYLK). 639–646 (GVSGSGKS) is an ATP binding site. The segment at 738–764 (CEACKGDGIIKIEMHFLPDVYVPCEVC) adopts a C4-type zinc-finger fold.

This sequence belongs to the ABC transporter superfamily. UvrA family. In terms of assembly, forms a heterotetramer with UvrB during the search for lesions.

It localises to the cytoplasm. In terms of biological role, the UvrABC repair system catalyzes the recognition and processing of DNA lesions. UvrA is an ATPase and a DNA-binding protein. A damage recognition complex composed of 2 UvrA and 2 UvrB subunits scans DNA for abnormalities. When the presence of a lesion has been verified by UvrB, the UvrA molecules dissociate. In Staphylococcus epidermidis (strain ATCC 35984 / DSM 28319 / BCRC 17069 / CCUG 31568 / BM 3577 / RP62A), this protein is UvrABC system protein A.